We begin with the raw amino-acid sequence, 135 residues long: Early nodulin-5 (135 aa).

An N-terminal signal peptide occupies residues 1–23; sequence MASSSSPIFLMIIFSMWLLFSYS.

As to expression, invasion zone and early symbiotic zone.

Its function is as follows. Involved in the infection process during the plant-rhizobium interaction. The polypeptide is Early nodulin-5 (ENOD5) (Pisum sativum (Garden pea)).